Here is a 1448-residue protein sequence, read N- to C-terminus: Sister chromatid cohesion protein PDS5 homolog B-A (1448 aa).

The HEAT repeat unit spans residues 383–419; that stretch reads LLVNDQLLNFVRERTLDKRWRVRKEAMMGLAQIYKKY. Residues 1141–1155 are compositionally biased toward polar residues; sequence AGKQMLSKSSRMETV. The tract at residues 1141–1448 is disordered; it reads AGKQMLSKSS…TGRLRSAKKR (308 aa). Residues 1156-1168 show a composition bias toward low complexity; it reads SNASSGSNPSSPG. The span at 1177–1186 shows a compositional bias: acidic residues; it reads MELDQSENED. Composition is skewed to basic and acidic residues over residues 1196–1214, 1233–1243, and 1264–1273; these read KKSD…LEKP, ELSKPAQEPKS, and WQEKRLKEDL. The span at 1285–1294 shows a compositional bias: basic residues; sequence KKGRRGRPPK. The segment at residues 1286–1298 is a DNA-binding region (a.T hook 1); that stretch reads KGRRGRPPKSAKM. The span at 1324 to 1341 shows a compositional bias: acidic residues; sequence PTDEDDHLEISEEQDFEN. Positions 1346–1356 are enriched in basic residues; sequence RKGRGSSRRTP. DNA-binding regions (a.T hook) lie at residues 1374-1386 and 1390-1402; these read QKRR…TPTV and KSHV…VVSK. Basic residues predominate over residues 1389–1399; sequence KKSHVGRPRKV.

The protein belongs to the PDS5 family. Interacts with the cohesin complex. Post-translationally, phosphorylated in mitotic cells.

It localises to the nucleus. Plays a role in androgen-induced proliferative arrest. Required for maintenance of sister chromatid cohesion during mitosis. In Xenopus laevis (African clawed frog), this protein is Sister chromatid cohesion protein PDS5 homolog B-A (pds5b-a).